A 356-amino-acid chain; its full sequence is 1-acyl-sn-glycerol-3-phosphate acyltransferase LPAT1, chloroplastic (356 aa).

The transit peptide at 1–56 (MDVASARSISSHPSYYGKPICSSQSSLIRISRDKVCCFGRISNGMTSFTTSLHAVP) directs the protein to the chloroplast. The helical transmembrane segment at 127-147 (GIFFCVVAGISATFLIVLMII) threads the bilayer. Residues 202–207 (HQSFLD) carry the HXXXXD motif motif. Residues 224 to 244 (TGIFVIPIIGWAMSMMGVVPL) traverse the membrane as a helical segment.

Belongs to the 1-acyl-sn-glycerol-3-phosphate acyltransferase family. As to expression, widely expressed. Expressed at higher level in leaves. Expressed at lower level in silique walls compared to leaves.

The protein resides in the plastid. Its subcellular location is the chloroplast membrane. The catalysed reaction is a fatty acyl-[ACP] + a 1-acyl-sn-glycero-3-phosphate = a 1,2-diacyl-sn-glycero-3-phosphate + holo-[ACP]. The enzyme catalyses a 1-acyl-sn-glycero-3-phosphate + an acyl-CoA = a 1,2-diacyl-sn-glycero-3-phosphate + CoA. It functions in the pathway phospholipid metabolism; CDP-diacylglycerol biosynthesis; CDP-diacylglycerol from sn-glycerol 3-phosphate: step 2/3. Functionally, plastidial enzyme of the prokaryotic glycerol-3-phosphate pathway that converts lysophosphatidic acid (LPA) into phosphatidic acid by incorporating an acyl moiety at position sn-2. Utilizes palmitoyl-ACP (16:0-ACP) to produce phosphatidic acid containing a saturated group at position sn-2, which is characteristic of lipids synthesized by the prokaryotic pathway. In vitro, can use 16:0-CoA as acyl donor. Essential for embryo development during the transition from the globular to the heart stage when chloroplasts begin to form. This Arabidopsis thaliana (Mouse-ear cress) protein is 1-acyl-sn-glycerol-3-phosphate acyltransferase LPAT1, chloroplastic.